The primary structure comprises 326 residues: Probable 9-O-acetyl-N-acetylneuraminic acid deacetylase (326 aa).

An N-terminal signal peptide occupies residues 1–21 (MNAIISPDYYYVLTVAGQSNA).

The protein localises to the periplasm. In terms of biological role, probably catalyzes the hydrolysis of the 9-O-acetyl group of 9-O-acetyl-N-acetylneuraminate (Neu5,9Ac2). Is required for growth of E.coli on Neu5,9Ac2, an alternative sialic acid commonly found in mammalian host mucosal sites, in particular in the human intestine. The sequence is that of Probable 9-O-acetyl-N-acetylneuraminic acid deacetylase (nanS) from Escherichia coli (strain K12).